The following is a 590-amino-acid chain: Probable lysine-specific demethylase 4B (590 aa).

In terms of domain architecture, JmjN spans 9–51; sequence IKVFRPTWEEFKDFPKYVAYMESQGAHKAGLAKVVPPPEWVPR. Position 130 (tyrosine 130) interacts with 2-oxoglutarate. The region spanning 140-306 is the JmjC domain; sequence DTDQDSWNIN…YGKRAVQCTC (167 aa). Fe cation is bound by residues histidine 186 and glutamate 188. The 2-oxoglutarate site is built by asparagine 196 and lysine 204. Positions 232 and 238 each coordinate Zn(2+). Residue lysine 239 participates in 2-oxoglutarate binding. Histidine 274 serves as a coordination point for Fe cation. Zn(2+)-binding residues include cysteine 304 and cysteine 306. Disordered regions lie at residues 372–395 and 417–590; these read PTKA…QNPN and ATDE…TASP. Residues 445–458 show a composition bias toward acidic residues; that stretch reads EYIDDGTEDDDEEE. A compositionally biased stretch (basic residues) spans 480 to 494; sequence SKRKTNSRNNRGRSP. Low complexity-rich tracts occupy residues 502–513 and 537–571; these read ISPASSTSSTSR and TTSP…TPPA.

It belongs to the JHDM3 histone demethylase family. Fe(2+) is required as a cofactor.

Its subcellular location is the nucleus. The enzyme catalyses N(6),N(6),N(6)-trimethyl-L-lysyl(9)-[histone H3] + 2 2-oxoglutarate + 2 O2 = N(6)-methyl-L-lysyl(9)-[histone H3] + 2 formaldehyde + 2 succinate + 2 CO2. Functionally, probable histone demethylase that specifically demethylates 'Lys-9' and 'Lys-36' residues of histone H3, thereby playing a central role in histone code. Demethylation of Lys residue generates formaldehyde and succinate. The protein is Probable lysine-specific demethylase 4B (Kdm4B) of Drosophila melanogaster (Fruit fly).